The following is a 138-amino-acid chain: Small ribosomal subunit protein uS11 (138 aa).

Over residues 1–12 (MAPKKPGAAGPK) the composition is skewed to low complexity. 2 disordered regions span residues 1–27 (MAPK…NVPH) and 119–138 (ISDV…RRRV). The span at 13 to 22 (KAQKTRRREK) shows a compositional bias: basic residues.

The protein belongs to the universal ribosomal protein uS11 family. In terms of assembly, part of the 30S ribosomal subunit. Interacts with proteins S7 and S18. Binds to IF-3.

Located on the platform of the 30S subunit, it bridges several disparate RNA helices of the 16S rRNA. Forms part of the Shine-Dalgarno cleft in the 70S ribosome. This chain is Small ribosomal subunit protein uS11, found in Mycobacteroides abscessus (strain ATCC 19977 / DSM 44196 / CCUG 20993 / CIP 104536 / JCM 13569 / NCTC 13031 / TMC 1543 / L948) (Mycobacterium abscessus).